The following is a 273-amino-acid chain: Large ribosomal subunit protein uL2cy (273 aa).

2 disordered regions span residues 1–27 and 224–273; these read MAIHLYKTSTPSTRNGAVDSQVKSNPR and NPVD…RRRK.

Belongs to the universal ribosomal protein uL2 family. As to quaternary structure, part of the 50S ribosomal subunit.

The protein localises to the plastid. It localises to the chloroplast. The sequence is that of Large ribosomal subunit protein uL2cy (rpl2-B) from Liriodendron tulipifera (Tuliptree).